An 84-amino-acid polypeptide reads, in one-letter code: Cytochrome b559 subunit alpha (84 aa).

The helical transmembrane segment at 22 to 36 (IIHSITIPALFVAGW) threads the bilayer. Heme is bound at residue H24.

It belongs to the PsbE/PsbF family. In terms of assembly, heterodimer of an alpha subunit and a beta subunit. PSII is composed of 1 copy each of membrane proteins PsbA, PsbB, PsbC, PsbD, PsbE, PsbF, PsbH, PsbI, PsbJ, PsbK, PsbL, PsbM, PsbT, PsbX, PsbY, PsbZ, Psb30/Ycf12, at least 3 peripheral proteins of the oxygen-evolving complex and a large number of cofactors. It forms dimeric complexes. It depends on heme b as a cofactor.

The protein localises to the plastid. Its subcellular location is the chloroplast thylakoid membrane. In terms of biological role, this b-type cytochrome is tightly associated with the reaction center of photosystem II (PSII). PSII is a light-driven water:plastoquinone oxidoreductase that uses light energy to abstract electrons from H(2)O, generating O(2) and a proton gradient subsequently used for ATP formation. It consists of a core antenna complex that captures photons, and an electron transfer chain that converts photonic excitation into a charge separation. The sequence is that of Cytochrome b559 subunit alpha from Guillardia theta (Cryptophyte).